The chain runs to 208 residues: Glycerol-3-phosphate acyltransferase 1 (208 aa).

5 helical membrane passes run 52 to 72 (VVLM…YLLI), 77 to 97 (WVIL…WLDF), 112 to 132 (FLLP…LVFI), 140 to 160 (IALA…YGSH), and 161 to 181 (SEFA…KFVL).

The protein belongs to the PlsY family. In terms of assembly, probably interacts with PlsX.

It is found in the cell membrane. It catalyses the reaction an acyl phosphate + sn-glycerol 3-phosphate = a 1-acyl-sn-glycero-3-phosphate + phosphate. It functions in the pathway lipid metabolism; phospholipid metabolism. Its function is as follows. Catalyzes the transfer of an acyl group from acyl-phosphate (acyl-PO(4)) to glycerol-3-phosphate (G3P) to form lysophosphatidic acid (LPA). This enzyme utilizes acyl-phosphate as fatty acyl donor, but not acyl-CoA or acyl-ACP. The sequence is that of Glycerol-3-phosphate acyltransferase 1 from Dehalococcoides mccartyi (strain ATCC BAA-2266 / KCTC 15142 / 195) (Dehalococcoides ethenogenes (strain 195)).